We begin with the raw amino-acid sequence, 252 residues long: Uracil-DNA glycosylase (252 aa).

Asp-87 serves as the catalytic Proton acceptor.

It belongs to the uracil-DNA glycosylase (UDG) superfamily. UNG family.

It is found in the host nucleus. It carries out the reaction Hydrolyzes single-stranded DNA or mismatched double-stranded DNA and polynucleotides, releasing free uracil.. Functionally, excises uracil residues from the DNA which can arise as a result of misincorporation of dUMP residues by DNA polymerase or deamination of cytosines. Therefore may reduce deleterious uracil incorporation into the viral genome, particularly in terminally differentiated cells which lack DNA repair enzymes. This is Uracil-DNA glycosylase (46) from Alcelaphine herpesvirus 1 (strain C500) (AlHV-1).